The chain runs to 201 residues: NADH-ubiquinone oxidoreductase 21.3 kDa subunit (201 aa).

As to quaternary structure, complex I is composed of about 40 different subunits.

It localises to the mitochondrion inner membrane. It carries out the reaction a ubiquinone + NADH + 5 H(+)(in) = a ubiquinol + NAD(+) + 4 H(+)(out). Functionally, transfer of electrons from NADH to the respiratory chain. The immediate electron acceptor for the enzyme is believed to be ubiquinone. In Neurospora crassa (strain ATCC 24698 / 74-OR23-1A / CBS 708.71 / DSM 1257 / FGSC 987), this protein is NADH-ubiquinone oxidoreductase 21.3 kDa subunit.